A 200-amino-acid chain; its full sequence is MILLKLYLTLAAILCQSRGTTSLDLDDLMTTNPEIQNEIINKHNDLRRTVDPPAKNMLKMSWDNTIAESAKRAALRCNQNEHTPVSGRTIGGVVCGENYFMSSNLRTWSFGIQSWFDERNYFKFGFGPTRAGVMVGHYTQVVWYKSYKMGCAINLCPNEPLKYFLVCQYCPGGNVVGRKYEPYAIGEPCAACPNNCDNGL.

The first 22 residues, 1-22 (MILLKLYLTLAAILCQSRGTTS), serve as a signal peptide directing secretion. Residues 41–169 (NKHNDLRRTV…PLKYFLVCQY (129 aa)) enclose the SCP domain. 4 disulfide bridges follow: Cys77-Cys156, Cys95-Cys170, Cys151-Cys167, and Cys189-Cys196.

It belongs to the CRISP family. Contains 8 disulfide bonds. In terms of tissue distribution, expressed by the venom gland.

It is found in the secreted. In terms of biological role, blocks ryanodine receptors, and potassium channels. The chain is Cysteine-rich venom protein VAR8 from Varanus acanthurus (Ridge-tailed monitor).